Reading from the N-terminus, the 307-residue chain is Ornithine carbamoyltransferase (307 aa).

Carbamoyl phosphate contacts are provided by residues 56 to 59 (STRT), Q83, R107, and 134 to 137 (HPCQ). L-ornithine is bound by residues N165, D223, and 227-228 (SM). Carbamoyl phosphate contacts are provided by residues 263-264 (CL) and R291.

Belongs to the aspartate/ornithine carbamoyltransferase superfamily. OTCase family.

The protein localises to the cytoplasm. The enzyme catalyses carbamoyl phosphate + L-ornithine = L-citrulline + phosphate + H(+). The protein operates within amino-acid biosynthesis; L-arginine biosynthesis; L-arginine from L-ornithine and carbamoyl phosphate: step 1/3. Functionally, reversibly catalyzes the transfer of the carbamoyl group from carbamoyl phosphate (CP) to the N(epsilon) atom of ornithine (ORN) to produce L-citrulline. The chain is Ornithine carbamoyltransferase from Cupriavidus metallidurans (strain ATCC 43123 / DSM 2839 / NBRC 102507 / CH34) (Ralstonia metallidurans).